The following is a 341-amino-acid chain: Hydrogenase expression/formation protein HupE (341 aa).

This sequence belongs to the HypE family.

Functionally, may be involved in the maturation of the NifE hydrogenase. This Azotobacter chroococcum mcd 1 protein is Hydrogenase expression/formation protein HupE (hupE).